The chain runs to 345 residues: Homeobox protein DBX1 (345 aa).

Disordered regions lie at residues 55 to 103 and 241 to 345; these read PRGS…VSPA and KERE…ITVS. A DNA-binding region (homeobox) is located at residues 182–241; sequence GMLRRAVFSDVQRKALEKMFQKQKYISKPDRKKLAAKLGLKDSQVKIWFQNRRMKWRNSK. Positions 300–309 are enriched in basic and acidic residues; sequence DPRHLRDPRL. A compositionally biased stretch (acidic residues) spans 330–345; the sequence is SDSEDDEEGEEEITVS.

The protein belongs to the H2.0 homeobox family.

Its subcellular location is the nucleus. Could have a role in patterning the central nervous system during embryogenesis. Has a key role in regulating the distinct phenotypic features that distinguish two major classes of ventral interneurons, V0 and V1 neurons. Regulates the transcription factor profile, neurotransmitter phenotype, intraspinal migratory path and axonal trajectory of V0 neurons, features that differentiate them from an adjacent set of V1 neurons. The chain is Homeobox protein DBX1 (DBX1) from Bos taurus (Bovine).